The sequence spans 478 residues: UDP-N-acetylmuramate--L-alanine ligase (478 aa).

Residue 122-128 (GTHGKTT) coordinates ATP.

This sequence belongs to the MurCDEF family.

Its subcellular location is the cytoplasm. It catalyses the reaction UDP-N-acetyl-alpha-D-muramate + L-alanine + ATP = UDP-N-acetyl-alpha-D-muramoyl-L-alanine + ADP + phosphate + H(+). It functions in the pathway cell wall biogenesis; peptidoglycan biosynthesis. Cell wall formation. This chain is UDP-N-acetylmuramate--L-alanine ligase, found in Stenotrophomonas maltophilia (strain R551-3).